A 998-amino-acid polypeptide reads, in one-letter code: RNA-directed RNA polymerase (998 aa).

A helical transmembrane segment spans residues 21 to 43 (IVIVSGCGAVAYCISKFWGYGAI). Positions 44–998 (APYPQSGGNR…AQPGAPTNPK (955 aa)) are cytoplasmic. The capping stretch occupies residues 91–282 (NGHAVSGAVR…LVYTIPQHTV (192 aa)). Asp-692 serves as the catalytic For RdRp/TNTase activity. The interval 901–998 (AKQTRSNSGT…AQPGAPTNPK (98 aa)) is disordered. Residues 985–998 (PKAGAQPGAPTNPK) are compositionally biased toward low complexity.

This sequence belongs to the nodaviridae RNA polymerase family. As to quaternary structure, homododecamer. Forms 2 stacked rings of 35-nm in diameter, arranged in a crown-like structure at the opening of virus-induced replication vesicles. Interacts with protein B2. Mn(2+) serves as cofactor.

It localises to the host mitochondrion outer membrane. It carries out the reaction RNA(n) + a ribonucleoside 5'-triphosphate = RNA(n+1) + diphosphate. Functionally, RNA-dependent RNA polymerase, which replicates the viral genome composed of 2 RNA segments, RNA1 and RNA2. Does not need an exogenous primer. Also possesses a terminal nucleotidyl transferase (TNTase) activity. The TNTase catalyzes the addition of nucleotide to the 3'-end of plus- and minus-stranded RNAs, probably to repair the 3'-end nucleotide loss. Forms the open necked connection to the cytosol of the virus-induced replication vesicles. Mediates viral RNA1 recruitment. This is RNA-directed RNA polymerase from Hepialidae (ghost moths).